Reading from the N-terminus, the 396-residue chain is NADH-quinone oxidoreductase subunit D 1 (396 aa).

Belongs to the complex I 49 kDa subunit family. As to quaternary structure, NDH-1 is composed of 14 different subunits. Subunits NuoB, C, D, E, F, and G constitute the peripheral sector of the complex.

It is found in the cell inner membrane. The catalysed reaction is a quinone + NADH + 5 H(+)(in) = a quinol + NAD(+) + 4 H(+)(out). NDH-1 shuttles electrons from NADH, via FMN and iron-sulfur (Fe-S) centers, to quinones in the respiratory chain. The immediate electron acceptor for the enzyme in this species is believed to be ubiquinone. Couples the redox reaction to proton translocation (for every two electrons transferred, four hydrogen ions are translocated across the cytoplasmic membrane), and thus conserves the redox energy in a proton gradient. The polypeptide is NADH-quinone oxidoreductase subunit D 1 (Rhizobium etli (strain ATCC 51251 / DSM 11541 / JCM 21823 / NBRC 15573 / CFN 42)).